Reading from the N-terminus, the 72-residue chain is Large ribosomal subunit protein uL29 (72 aa).

This sequence belongs to the universal ribosomal protein uL29 family.

The polypeptide is Large ribosomal subunit protein uL29 (Thermus thermophilus (strain ATCC BAA-163 / DSM 7039 / HB27)).